A 185-amino-acid polypeptide reads, in one-letter code: Peptidyl-tRNA hydrolase (185 aa).

Residue Tyr-14 coordinates tRNA. His-19 acts as the Proton acceptor in catalysis. Residues Tyr-65, Asn-67, and Asn-113 each coordinate tRNA.

This sequence belongs to the PTH family. Monomer.

It localises to the cytoplasm. The enzyme catalyses an N-acyl-L-alpha-aminoacyl-tRNA + H2O = an N-acyl-L-amino acid + a tRNA + H(+). Hydrolyzes ribosome-free peptidyl-tRNAs (with 1 or more amino acids incorporated), which drop off the ribosome during protein synthesis, or as a result of ribosome stalling. Functionally, catalyzes the release of premature peptidyl moieties from peptidyl-tRNA molecules trapped in stalled 50S ribosomal subunits, and thus maintains levels of free tRNAs and 50S ribosomes. In Rickettsia felis (strain ATCC VR-1525 / URRWXCal2) (Rickettsia azadi), this protein is Peptidyl-tRNA hydrolase.